Consider the following 388-residue polypeptide: Formate-dependent phosphoribosylglycinamide formyltransferase (388 aa).

Residues 20 to 21 (EL) and Glu-80 each bind N(1)-(5-phospho-beta-D-ribosyl)glycinamide. Residues Arg-112, Lys-153, 158–163 (SSGKGQ), 193–196 (EEFI), and Glu-201 contribute to the ATP site. The ATP-grasp domain maps to 117–306 (RLAFEKLGLR…EFEIHARAIL (190 aa)). Glu-265 and Glu-277 together coordinate Mg(2+). N(1)-(5-phospho-beta-D-ribosyl)glycinamide is bound by residues Asp-284, Lys-352, and 359–360 (RR).

It belongs to the PurK/PurT family. As to quaternary structure, homodimer.

It carries out the reaction N(1)-(5-phospho-beta-D-ribosyl)glycinamide + formate + ATP = N(2)-formyl-N(1)-(5-phospho-beta-D-ribosyl)glycinamide + ADP + phosphate + H(+). The protein operates within purine metabolism; IMP biosynthesis via de novo pathway; N(2)-formyl-N(1)-(5-phospho-D-ribosyl)glycinamide from N(1)-(5-phospho-D-ribosyl)glycinamide (formate route): step 1/1. Involved in the de novo purine biosynthesis. Catalyzes the transfer of formate to 5-phospho-ribosyl-glycinamide (GAR), producing 5-phospho-ribosyl-N-formylglycinamide (FGAR). Formate is provided by PurU via hydrolysis of 10-formyl-tetrahydrofolate. This chain is Formate-dependent phosphoribosylglycinamide formyltransferase, found in Methanococcus maripaludis (strain C7 / ATCC BAA-1331).